Here is a 399-residue protein sequence, read N- to C-terminus: Enoyl-[acyl-carrier-protein] reductase [NADH] (399 aa).

NAD(+)-binding positions include Gly-48–Tyr-53, Phe-74–Glu-75, Asp-111–Ala-112, and Leu-139–Ala-140. Tyr-225 provides a ligand contact to substrate. Catalysis depends on Tyr-235, which acts as the Proton donor. NAD(+) is bound by residues Lys-244 and Val-274–Thr-276.

Belongs to the TER reductase family. Monomer.

It catalyses the reaction a 2,3-saturated acyl-[ACP] + NAD(+) = a (2E)-enoyl-[ACP] + NADH + H(+). Its pathway is lipid metabolism; fatty acid biosynthesis. In terms of biological role, involved in the final reduction of the elongation cycle of fatty acid synthesis (FAS II). Catalyzes the reduction of a carbon-carbon double bond in an enoyl moiety that is covalently linked to an acyl carrier protein (ACP). The sequence is that of Enoyl-[acyl-carrier-protein] reductase [NADH] from Yersinia enterocolitica serotype O:8 / biotype 1B (strain NCTC 13174 / 8081).